The chain runs to 152 residues: Large ribosomal subunit protein uL22 (152 aa).

Low complexity predominate over residues 124–143; that stretch reads APTKAASKKAAPAKQTTPAA. Residues 124–152 form a disordered region; sequence APTKAASKKAAPAKQTTPAATESKTEGAE.

This sequence belongs to the universal ribosomal protein uL22 family. In terms of assembly, part of the 50S ribosomal subunit.

Functionally, this protein binds specifically to 23S rRNA; its binding is stimulated by other ribosomal proteins, e.g. L4, L17, and L20. It is important during the early stages of 50S assembly. It makes multiple contacts with different domains of the 23S rRNA in the assembled 50S subunit and ribosome. In terms of biological role, the globular domain of the protein is located near the polypeptide exit tunnel on the outside of the subunit, while an extended beta-hairpin is found that lines the wall of the exit tunnel in the center of the 70S ribosome. This Salinispora arenicola (strain CNS-205) protein is Large ribosomal subunit protein uL22.